Consider the following 81-residue polypeptide: Protein Vpu (81 aa).

Topologically, residues 1-7 (MQSLEIL) are extracellular. Residues 8-28 (AIVALVVAAILAIVVWTIVGI) form a helical membrane-spanning segment. Residues 29–81 (EIRKTLRQKKIDRLIDRIRERAEDSGNESDGDEEELSALVEMGHHAPWDVDDL) are Cytoplasmic-facing. Residues 50-81 (AEDSGNESDGDEEELSALVEMGHHAPWDVDDL) are disordered. A phosphoserine; by host CK2 mark is found at S53 and S57. The segment covering 53–64 (SGNESDGDEEEL) has biased composition (acidic residues). Residues 70–81 (MGHHAPWDVDDL) are compositionally biased toward basic and acidic residues.

This sequence belongs to the HIV-1 VPU protein family. In terms of assembly, homopentamer. Interacts with host CD4 and BRTC; these interactions induce proteasomal degradation of CD4. Interacts with host BST2; this interaction leads to the degradation of host BST2. Interacts with host FBXW11. Interacts with host AP1M1; this interaction plays a role in the mistrafficking and subsequent degradation of host BST2. Interacts with host RANBP2; this interaction allows Vpu to down-regulate host BLM sumoylation. Phosphorylated by host CK2. This phosphorylation is necessary for interaction with human BTRC and degradation of CD4.

The protein resides in the host membrane. Ion channel activity is inhibited by hexamethylene amiloride in vitro. In terms of biological role, enhances virion budding by targeting host CD4 and Tetherin/BST2 to proteasome degradation. Degradation of CD4 prevents any unwanted premature interactions between viral Env and its host receptor CD4 in the endoplasmic reticulum. Degradation of antiretroviral protein Tetherin/BST2 is important for virion budding, as BST2 tethers new viral particles to the host cell membrane. Mechanistically, Vpu bridges either CD4 or BST2 to BTRC, a substrate recognition subunit of the Skp1/Cullin/F-box protein E3 ubiquitin ligase, induces their ubiquitination and subsequent proteasomal degradation. The alteration of the E3 ligase specificity by Vpu seems to promote the degradation of host IKBKB, leading to NF-kappa-B down-regulation and subsequent apoptosis. Acts as a viroporin that forms an oligomeric ion channel in membranes. Modulates the host DNA repair mechanisms to promote degradation of nuclear viral cDNA in cells that are already productively infected in order to suppress immune sensing and proviral hyper-integration (superinfection). Manipulates PML-NBs and modulates SUMOylation of host BLM protein thereby enhancing its DNA-end processing activity toward viral unintegrated linear DNA. Also inhibits RAD52-mediated homologous repair of viral cDNA, preventing the generation of dead-end circular forms of single copies of the long terminal repeat and permitting sustained nucleolytic attack. In Homo sapiens (Human), this protein is Protein Vpu.